Reading from the N-terminus, the 547-residue chain is Apolipoprotein N-acyltransferase (547 aa).

The next 6 membrane-spanning stretches (helical) occupy residues 31-51 (PLPAWSLAPVQVIALAVAAHA), 65-85 (GWLFAMFSFSLGLYWLYVSMH), 89-109 (GLAAPLAAAGVLALSAFLALF), 144-164 (AACWAALEWLRAVVLTGFPWL), 181-201 (LLGVHGMALLAAFAAAALAGL), and 215-235 (LAAGVALLLAGAGWLLGQFSW). In terms of domain architecture, CN hydrolase spans 248–511 (VQGNVEQSQK…AGVLPVAVQG (264 aa)). Residue Glu-292 is the Proton acceptor of the active site. Lys-366 is a catalytic residue. The Nucleophile role is filled by Cys-416.

It belongs to the CN hydrolase family. Apolipoprotein N-acyltransferase subfamily.

It is found in the cell inner membrane. It catalyses the reaction N-terminal S-1,2-diacyl-sn-glyceryl-L-cysteinyl-[lipoprotein] + a glycerophospholipid = N-acyl-S-1,2-diacyl-sn-glyceryl-L-cysteinyl-[lipoprotein] + a 2-acyl-sn-glycero-3-phospholipid + H(+). The protein operates within protein modification; lipoprotein biosynthesis (N-acyl transfer). Functionally, catalyzes the phospholipid dependent N-acylation of the N-terminal cysteine of apolipoprotein, the last step in lipoprotein maturation. This is Apolipoprotein N-acyltransferase from Bordetella bronchiseptica (strain ATCC BAA-588 / NCTC 13252 / RB50) (Alcaligenes bronchisepticus).